The primary structure comprises 395 residues: NAD(P)H-quinone oxidoreductase subunit H, chloroplastic (395 aa).

This sequence belongs to the complex I 49 kDa subunit family. In terms of assembly, NDH is composed of at least 16 different subunits, 5 of which are encoded in the nucleus.

It localises to the plastid. The protein localises to the chloroplast thylakoid membrane. The catalysed reaction is a plastoquinone + NADH + (n+1) H(+)(in) = a plastoquinol + NAD(+) + n H(+)(out). It carries out the reaction a plastoquinone + NADPH + (n+1) H(+)(in) = a plastoquinol + NADP(+) + n H(+)(out). Functionally, NDH shuttles electrons from NAD(P)H:plastoquinone, via FMN and iron-sulfur (Fe-S) centers, to quinones in the photosynthetic chain and possibly in a chloroplast respiratory chain. The immediate electron acceptor for the enzyme in this species is believed to be plastoquinone. Couples the redox reaction to proton translocation, and thus conserves the redox energy in a proton gradient. This is NAD(P)H-quinone oxidoreductase subunit H, chloroplastic from Dioscorea elephantipes (Elephant's foot yam).